The sequence spans 440 residues: 3-phosphoshikimate 1-carboxyvinyltransferase (440 aa).

Residues Lys26, Ser27, and Arg31 each contribute to the 3-phosphoshikimate site. Position 26 (Lys26) interacts with phosphoenolpyruvate. The phosphoenolpyruvate site is built by Gly99 and Arg127. Positions 172, 174, 320, and 347 each coordinate 3-phosphoshikimate. Gln174 lines the phosphoenolpyruvate pocket. The active-site Proton acceptor is Asp320. The phosphoenolpyruvate site is built by Arg351 and Arg392.

It belongs to the EPSP synthase family. Monomer.

The protein resides in the cytoplasm. The catalysed reaction is 3-phosphoshikimate + phosphoenolpyruvate = 5-O-(1-carboxyvinyl)-3-phosphoshikimate + phosphate. The protein operates within metabolic intermediate biosynthesis; chorismate biosynthesis; chorismate from D-erythrose 4-phosphate and phosphoenolpyruvate: step 6/7. Catalyzes the transfer of the enolpyruvyl moiety of phosphoenolpyruvate (PEP) to the 5-hydroxyl of shikimate-3-phosphate (S3P) to produce enolpyruvyl shikimate-3-phosphate and inorganic phosphate. The protein is 3-phosphoshikimate 1-carboxyvinyltransferase of Xanthomonas oryzae pv. oryzae (strain MAFF 311018).